Consider the following 63-residue polypeptide: Putative flagellar calcium-binding protein (63 aa).

Polar residues predominate over residues 1–11; it reads MGCISSKSTQT. Positions 1–23 are disordered; it reads MGCISSKSTQTGKKEGKTAAERK. Positions 12-23 are enriched in basic and acidic residues; it reads GKKEGKTAAERK. Positions 40-63 constitute an EF-hand domain; it reads EDKARRIELFKKFDKNNTGKLSME. 4 residues coordinate Ca(2+): D53, N55, T57, and K59.

The protein belongs to the calflagin family.

The protein resides in the cell projection. It localises to the cilium. It is found in the flagellum. The protein is Putative flagellar calcium-binding protein (CABP) of Crithidia fasciculata.